The primary structure comprises 416 residues: Serine hydroxymethyltransferase (416 aa).

(6S)-5,6,7,8-tetrahydrofolate-binding positions include Leu-121 and 125 to 127 (GHL). Residue Lys-229 is modified to N6-(pyridoxal phosphate)lysine.

The protein belongs to the SHMT family. Homodimer. Pyridoxal 5'-phosphate serves as cofactor.

Its subcellular location is the cytoplasm. It carries out the reaction (6R)-5,10-methylene-5,6,7,8-tetrahydrofolate + glycine + H2O = (6S)-5,6,7,8-tetrahydrofolate + L-serine. It functions in the pathway one-carbon metabolism; tetrahydrofolate interconversion. Its pathway is amino-acid biosynthesis; glycine biosynthesis; glycine from L-serine: step 1/1. Catalyzes the reversible interconversion of serine and glycine with tetrahydrofolate (THF) serving as the one-carbon carrier. This reaction serves as the major source of one-carbon groups required for the biosynthesis of purines, thymidylate, methionine, and other important biomolecules. Also exhibits THF-independent aldolase activity toward beta-hydroxyamino acids, producing glycine and aldehydes, via a retro-aldol mechanism. In Bordetella avium (strain 197N), this protein is Serine hydroxymethyltransferase.